A 545-amino-acid polypeptide reads, in one-letter code: CTP synthase (545 aa).

Residues 1–266 are amidoligase domain; that stretch reads MTHFIFVTGG…DDLICERFGF (266 aa). Residue Ser-13 participates in CTP binding. Ser-13 contributes to the UTP binding site. ATP is bound by residues 14 to 19 and Asp-71; that span reads SLGKGI. The Mg(2+) site is built by Asp-71 and Glu-140. CTP contacts are provided by residues 147-149, 187-192, and Lys-223; these read DIE and KTKPTQ. Residues 187-192 and Lys-223 each bind UTP; that span reads KTKPTQ. 239 to 241 is an ATP binding site; sequence KDA. The Glutamine amidotransferase type-1 domain occupies 292 to 543; that stretch reads RVAMVGKYVE…IDAAKTQHQK (252 aa). Gly-353 is a binding site for L-glutamine. Cys-380 acts as the Nucleophile; for glutamine hydrolysis in catalysis. L-glutamine is bound by residues 381-384, Glu-404, and Arg-471; that span reads LGMQ. Active-site residues include His-516 and Glu-518.

This sequence belongs to the CTP synthase family. In terms of assembly, homotetramer.

It carries out the reaction UTP + L-glutamine + ATP + H2O = CTP + L-glutamate + ADP + phosphate + 2 H(+). The enzyme catalyses L-glutamine + H2O = L-glutamate + NH4(+). It catalyses the reaction UTP + NH4(+) + ATP = CTP + ADP + phosphate + 2 H(+). Its pathway is pyrimidine metabolism; CTP biosynthesis via de novo pathway; CTP from UDP: step 2/2. Allosterically activated by GTP, when glutamine is the substrate; GTP has no effect on the reaction when ammonia is the substrate. The allosteric effector GTP functions by stabilizing the protein conformation that binds the tetrahedral intermediate(s) formed during glutamine hydrolysis. Inhibited by the product CTP, via allosteric rather than competitive inhibition. Functionally, catalyzes the ATP-dependent amination of UTP to CTP with either L-glutamine or ammonia as the source of nitrogen. Regulates intracellular CTP levels through interactions with the four ribonucleotide triphosphates. This is CTP synthase from Acinetobacter baumannii (strain AB307-0294).